The primary structure comprises 1250 residues: DNA-directed RNA polymerase subunit beta (1250 aa).

Residues 1139–1226 are disordered; it reads GGAELAKPAP…DLFDEGDEDL (88 aa). Composition is skewed to acidic residues over residues 1155–1183 and 1207–1226; these read ESGE…DPEE and ADDD…DEDL.

It belongs to the RNA polymerase beta chain family. In terms of assembly, the RNAP catalytic core consists of 2 alpha, 1 beta, 1 beta' and 1 omega subunit. When a sigma factor is associated with the core the holoenzyme is formed, which can initiate transcription.

It catalyses the reaction RNA(n) + a ribonucleoside 5'-triphosphate = RNA(n+1) + diphosphate. Its function is as follows. DNA-dependent RNA polymerase catalyzes the transcription of DNA into RNA using the four ribonucleoside triphosphates as substrates. The sequence is that of DNA-directed RNA polymerase subunit beta from Symbiobacterium thermophilum (strain DSM 24528 / JCM 14929 / IAM 14863 / T).